The primary structure comprises 161 residues: Peptidyl-prolyl cis-trans isomerase-like 3 (161 aa).

The region spanning 1–154 (MAVTLHTDVG…NDVHIKDITI (154 aa)) is the PPIase cyclophilin-type domain.

It belongs to the cyclophilin-type PPIase family. PPIL3 subfamily.

The catalysed reaction is [protein]-peptidylproline (omega=180) = [protein]-peptidylproline (omega=0). Its function is as follows. PPIases accelerate the folding of proteins. It catalyzes the cis-trans isomerization of proline imidic peptide bonds in oligopeptides. The sequence is that of Peptidyl-prolyl cis-trans isomerase-like 3 (PPIL3) from Gallus gallus (Chicken).